A 90-amino-acid polypeptide reads, in one-letter code: Small ribosomal subunit protein bS16 (90 aa).

It belongs to the bacterial ribosomal protein bS16 family.

This Bacillus velezensis (strain DSM 23117 / BGSC 10A6 / LMG 26770 / FZB42) (Bacillus amyloliquefaciens subsp. plantarum) protein is Small ribosomal subunit protein bS16.